Here is a 528-residue protein sequence, read N- to C-terminus: RNA polymerase sigma factor SigA (528 aa).

Positions 1–10 are enriched in polar residues; the sequence is MAATKASTAT. The segment at 1 to 211 is disordered; the sequence is MAATKASTAT…FVWDEDESEA (211 aa). Low complexity-rich tracts occupy residues 19 to 31, 38 to 56, and 80 to 92; these read TKSP…GAKT, AKSA…PAAR, and AAKS…PSAR. A compositionally biased stretch (basic and acidic residues) spans 100 to 109; the sequence is APKDAQHEAA. Positions 110–173 are enriched in acidic residues; that stretch reads TDPEDALDSV…DDEDHEDLEA (64 aa). Residues 295 to 365 are sigma-70 factor domain-2; the sequence is LLEANLRLVV…TRAMADQART (71 aa). The Interaction with polymerase core subunit RpoC signature appears at 319–322; it reads DLIQ. The segment at 374-450 is sigma-70 factor domain-3; sequence EVINKLGRIQ…DSEAVVAVDA (77 aa). A sigma-70 factor domain-4 region spans residues 463-516; sequence VLDTLSEREAGVVRLRFGLTDGQPRTLDEIGQVYGVTRERIRQIESKTMSKLRH. Positions 489-508 form a DNA-binding region, H-T-H motif; the sequence is LDEIGQVYGVTRERIRQIES.

It belongs to the sigma-70 factor family. RpoD/SigA subfamily. As to quaternary structure, interacts transiently with the RNA polymerase catalytic core.

The protein resides in the cytoplasm. Its function is as follows. Sigma factors are initiation factors that promote the attachment of RNA polymerase to specific initiation sites and are then released. This sigma factor is the primary sigma factor during exponential growth. The protein is RNA polymerase sigma factor SigA of Mycobacterium bovis (strain ATCC BAA-935 / AF2122/97).